Reading from the N-terminus, the 426-residue chain is Glucose-1-phosphate adenylyltransferase (426 aa).

Alpha-D-glucose 1-phosphate-binding positions include Tyr-100, Gly-165, 180–181, and Ser-191; that span reads EK.

Belongs to the bacterial/plant glucose-1-phosphate adenylyltransferase family. Homotetramer.

The enzyme catalyses alpha-D-glucose 1-phosphate + ATP + H(+) = ADP-alpha-D-glucose + diphosphate. It functions in the pathway glycan biosynthesis; glycogen biosynthesis. Its function is as follows. Involved in the biosynthesis of ADP-glucose, a building block required for the elongation reactions to produce glycogen. Catalyzes the reaction between ATP and alpha-D-glucose 1-phosphate (G1P) to produce pyrophosphate and ADP-Glc. The protein is Glucose-1-phosphate adenylyltransferase of Acetivibrio thermocellus (strain ATCC 27405 / DSM 1237 / JCM 9322 / NBRC 103400 / NCIMB 10682 / NRRL B-4536 / VPI 7372) (Clostridium thermocellum).